Here is a 313-residue protein sequence, read N- to C-terminus: Ribosomal RNA small subunit methyltransferase H (313 aa).

Residues 33-35 (AGH), D53, F82, D103, and Q110 each bind S-adenosyl-L-methionine.

Belongs to the methyltransferase superfamily. RsmH family.

Its subcellular location is the cytoplasm. It carries out the reaction cytidine(1402) in 16S rRNA + S-adenosyl-L-methionine = N(4)-methylcytidine(1402) in 16S rRNA + S-adenosyl-L-homocysteine + H(+). Specifically methylates the N4 position of cytidine in position 1402 (C1402) of 16S rRNA. The protein is Ribosomal RNA small subunit methyltransferase H of Acetivibrio thermocellus (strain ATCC 27405 / DSM 1237 / JCM 9322 / NBRC 103400 / NCIMB 10682 / NRRL B-4536 / VPI 7372) (Clostridium thermocellum).